Consider the following 510-residue polypeptide: GMP synthase [glutamine-hydrolyzing] (510 aa).

The 191-residue stretch at 5–195 (MIVVLDFGSQ…VFEVCGCRGD (191 aa)) folds into the Glutamine amidotransferase type-1 domain. Cys-82 acts as the Nucleophile in catalysis. Active-site residues include His-169 and Glu-171. Positions 196 to 385 (WTMENFIDEQ…LGIPDEIVWR (190 aa)) constitute a GMPS ATP-PPase domain. Position 223-229 (223-229 (SGGVDSS)) interacts with ATP.

In terms of assembly, homodimer.

It carries out the reaction XMP + L-glutamine + ATP + H2O = GMP + L-glutamate + AMP + diphosphate + 2 H(+). The protein operates within purine metabolism; GMP biosynthesis; GMP from XMP (L-Gln route): step 1/1. Functionally, catalyzes the synthesis of GMP from XMP. The polypeptide is GMP synthase [glutamine-hydrolyzing] (Geobacillus kaustophilus (strain HTA426)).